A 305-amino-acid polypeptide reads, in one-letter code: Glycine cleavage system transcriptional activator (305 aa).

In terms of domain architecture, HTH lysR-type spans proline 6–threonine 63. The segment at residues phenylalanine 23–lysine 42 is a DNA-binding region (H-T-H motif).

This sequence belongs to the LysR transcriptional regulatory family.

It localises to the cytoplasm. In terms of biological role, regulatory protein for the glycine cleavage system operon (gcv). Mediates activation of gcv by glycine and repression by purines. GcvA is negatively autoregulated. Binds to three sites upstream of the gcv promoter. This chain is Glycine cleavage system transcriptional activator (gcvA), found in Escherichia coli O157:H7.